Consider the following 373-residue polypeptide: uncharacterized protein (373 aa).

This is an uncharacterized protein from Thermoproteus tenax.